Reading from the N-terminus, the 356-residue chain is Tyrosine recombinase XerS (356 aa).

The Core-binding (CB) domain occupies 16-121 (LMPWYVLEYY…ALSSLYKYLT (106 aa)). The Tyr recombinase domain occupies 169–354 (GFLTYIDQEH…VNDEQKNALD (186 aa)). Catalysis depends on residues arginine 210, lysine 234, histidine 306, arginine 309, and histidine 332. Tyrosine 341 serves as the catalytic O-(3'-phospho-DNA)-tyrosine intermediate.

The protein belongs to the 'phage' integrase family. XerS subfamily.

Its subcellular location is the cytoplasm. With respect to regulation, ftsK is required for recombination. Functionally, site-specific tyrosine recombinase, which acts by catalyzing the cutting and rejoining of the recombining DNA molecules. Essential to convert dimers of the bacterial chromosome into monomers to permit their segregation at cell division. This Streptococcus pneumoniae serotype 2 (strain D39 / NCTC 7466) protein is Tyrosine recombinase XerS.